The sequence spans 441 residues: Protein translocase subunit SecY (441 aa).

The next 10 membrane-spanning stretches (helical) occupy residues 18–38, 78–98, 124–144, 157–177, 180–200, 215–235, 272–292, 318–338, 382–402, and 403–423; these read ILFT…PSPG, AVGV…TVVI, IALA…GGLL, IFTL…VMWM, LITE…GIAA, GVVF…VVFV, VIPV…TQLI, LVYI…YVSI, IYLG…AGGT, and VQNL…GLDT.

Belongs to the SecY/SEC61-alpha family. As to quaternary structure, component of the Sec protein translocase complex. Heterotrimer consisting of SecY, SecE and SecG subunits. The heterotrimers can form oligomers, although 1 heterotrimer is thought to be able to translocate proteins. Interacts with the ribosome. Interacts with SecDF, and other proteins may be involved. Interacts with SecA.

It is found in the cell membrane. In terms of biological role, the central subunit of the protein translocation channel SecYEG. Consists of two halves formed by TMs 1-5 and 6-10. These two domains form a lateral gate at the front which open onto the bilayer between TMs 2 and 7, and are clamped together by SecE at the back. The channel is closed by both a pore ring composed of hydrophobic SecY resides and a short helix (helix 2A) on the extracellular side of the membrane which forms a plug. The plug probably moves laterally to allow the channel to open. The ring and the pore may move independently. The polypeptide is Protein translocase subunit SecY (Mycobacterium bovis (strain ATCC BAA-935 / AF2122/97)).